We begin with the raw amino-acid sequence, 67 residues long: Large ribosomal subunit protein bL35 (67 aa).

This sequence belongs to the bacterial ribosomal protein bL35 family.

The chain is Large ribosomal subunit protein bL35 from Bartonella tribocorum (strain CIP 105476 / IBS 506).